The primary structure comprises 32 residues: Ranatuerin-2CSa (32 aa).

A disulfide bond links Cys27 and Cys32.

Expressed by the skin glands.

The protein localises to the secreted. It is found in the target cell membrane. In terms of biological role, antibacterial peptide with amphipathic alpha-helical structure. Active against E.coli ATCC 25726 (MIC=4-5 uM) and S.aureus ATCC 25923 (MIC=8-10 uM). Has a weak hemolytic activity on human erythrocytes (LC(50)=150-160 uM). The sequence is that of Ranatuerin-2CSa from Rana cascadae (Cascades frog).